A 199-amino-acid chain; its full sequence is Recombination protein RecR (199 aa).

A C4-type zinc finger spans residues 58 to 73; that stretch reads CSTCNNLTDKDPCTIC. Residues 81–176 enclose the Toprim domain; sequence NLICVVQDAR…RVTRLAYGLP (96 aa).

This sequence belongs to the RecR family.

Its function is as follows. May play a role in DNA repair. It seems to be involved in an RecBC-independent recombinational process of DNA repair. It may act with RecF and RecO. The protein is Recombination protein RecR of Natranaerobius thermophilus (strain ATCC BAA-1301 / DSM 18059 / JW/NM-WN-LF).